We begin with the raw amino-acid sequence, 231 residues long: Putative cobalt transport protein CbiM 2 (231 aa).

6 helical membrane-spanning segments follow: residues 8-28 (LPIG…IYGI), 41-61 (VLPL…LKIP), 75-95 (LSAA…VLLF), 108-128 (LGAN…LVFV), 136-156 (VGIG…TYTV), and 176-196 (IAFA…EGII).

The protein belongs to the CbiM family. Forms an energy-coupling factor (ECF) transporter complex composed of an ATP-binding protein (A component, CbiO), a transmembrane protein (T component, CbiQ) and 2 possible substrate-capture proteins (S components, CbiM and CbiN) of unknown stoichimetry.

It is found in the cell membrane. It functions in the pathway cofactor biosynthesis; adenosylcobalamin biosynthesis. Functionally, part of the energy-coupling factor (ECF) transporter complex CbiMNOQ involved in cobalt import. The polypeptide is Putative cobalt transport protein CbiM 2 (Methanocorpusculum labreanum (strain ATCC 43576 / DSM 4855 / Z)).